We begin with the raw amino-acid sequence, 148 residues long: Ribosome maturation factor RimP (148 aa).

This sequence belongs to the RimP family.

It localises to the cytoplasm. Its function is as follows. Required for maturation of 30S ribosomal subunits. This chain is Ribosome maturation factor RimP, found in Nautilia profundicola (strain ATCC BAA-1463 / DSM 18972 / AmH).